Here is a 260-residue protein sequence, read N- to C-terminus: Aspartate/glutamate leucyltransferase (260 aa).

A compositionally biased stretch (basic and acidic residues) spans 241-251 (DRLPEEGDRGP). The interval 241–260 (DRLPEEGDRGPARFPASLTE) is disordered.

Belongs to the R-transferase family. Bpt subfamily.

Its subcellular location is the cytoplasm. It carries out the reaction N-terminal L-glutamyl-[protein] + L-leucyl-tRNA(Leu) = N-terminal L-leucyl-L-glutamyl-[protein] + tRNA(Leu) + H(+). It catalyses the reaction N-terminal L-aspartyl-[protein] + L-leucyl-tRNA(Leu) = N-terminal L-leucyl-L-aspartyl-[protein] + tRNA(Leu) + H(+). Its function is as follows. Functions in the N-end rule pathway of protein degradation where it conjugates Leu from its aminoacyl-tRNA to the N-termini of proteins containing an N-terminal aspartate or glutamate. The protein is Aspartate/glutamate leucyltransferase of Gluconacetobacter diazotrophicus (strain ATCC 49037 / DSM 5601 / CCUG 37298 / CIP 103539 / LMG 7603 / PAl5).